We begin with the raw amino-acid sequence, 171 residues long: Minor capsid protein 3 (171 aa).

In terms of assembly, interacts with the major capsid protein.

The protein localises to the virion. Its function is as follows. One of the minor capsid proteins that constitute a network internal to the major capsid proteins and outside the lipid membrane. The minor capsid proteins glue and stabilize the capsomers. The polypeptide is Minor capsid protein 3 (Chlorella (PBCV-1)).